The following is a 4249-amino-acid chain: Fibrocystin-L (4249 aa).

Positions 1-20 (MGHLWLSGTWFLFGLLWCAA) are cleaved as a signal peptide. Over 21-4222 (DSHKGSSETI…TPVQTLAVIT (4202 aa)) the chain is Extracellular. IPT/TIG domains follow at residues 31–132 (PKVT…GVAS), 146–255 (PTIR…KMTY), 270–361 (PEVV…ILEY), 1067–1153 (PLIL…HFIY), 1155–1234 (SQIS…SFSY), 1240–1323 (PVVT…KLNA), 1329–1468 (LEVI…SFSY), 1565–1648 (PSII…TLTK), 1658–1742 (PNID…SFSY), 1748–1827 (PYVT…NLTI), 1830–1909 (PAVA…SFTY), 1915–1996 (PFLK…AFEY), 1998–2084 (LSIQ…LFTY), and 2090–2175 (PLIT…DFLY). The PA14 domain maps to 337–492 (PGGRGLKVEV…NVFTEQQTGD (156 aa)). Thr-1297 and Thr-1359 each carry an O-linked (GalNAc...) threonine glycan. An O-linked (GalNAc...) threonine glycan is attached at Thr-1838. A G8 1 domain is found at 2183–2303 (SSWGGSPPPE…IPVVWTRLTH (121 aa)). 5 PbH1 repeats span residues 2484–2506 (QFKS…TIHN), 2507–2529 (THHL…FIED), 2565–2587 (NPNN…WYRM), 2664–2686 (GGAL…ETKR), and 2732–2755 (SQGL…ALGV). Residues 3035 to 3173 (SFWQSSPENN…HSVYKTKLLE (139 aa)) form the G8 2 domain. PbH1 repeat units follow at residues 3292–3314 (KGNA…RDST), 3354–3376 (TDGV…RIWG), 3415–3437 (GTNT…RIDG), 3470–3492 (PGCS…YFQT), and 3493–3514 (TESV…FSMV). Thr-3735 is a glycosylation site (O-linked (GalNAc...) threonine). The interval 4183–4208 (LSAQSVPGGSGSSPGSGSSSSGHSKA) is disordered. The span at 4197–4208 (GSGSSSSGHSKA) shows a compositional bias: low complexity. Residues 4223-4243 (ACLVGRLLLLEVFMAAVFILN) form a helical membrane-spanning segment. The Cytoplasmic portion of the chain corresponds to 4244 to 4249 (TTVGIN).

As to expression, expressed in neurons in the hippocampus and the cerebral cortex (at protein level). Transiently expressed at high levels in inner ear hair cells, predominantly in outer hair cells, during early postnatal development (at protein level).

It localises to the membrane. The protein localises to the cell projection. The protein resides in the stereocilium membrane. Functionally, component of hair-cell stereocilia coat. Required for normal hearing. The polypeptide is Fibrocystin-L (Pkhd1l1) (Mus musculus (Mouse)).